A 298-amino-acid polypeptide reads, in one-letter code: Protein RKD2 (298 aa).

Basic and acidic residues-rich tracts occupy residues 1–10 (MADHTTKEQK) and 81–102 (EQNR…VKET). Disordered stretches follow at residues 1-22 (MADH…PSFD) and 73-112 (SSAS…NERH). In terms of domain architecture, RWP-RK spans 121 to 203 (SDITTYTTSS…KMEGEENAEK (83 aa)). Residues 188–222 (NVKELQKMEGEENAEKLQDALEMLEKEKRTIEDLP) are a coiled coil. Residues 241 to 279 (NHKRKKKRSLKSDQSQVPSCSSSGSVPSDESVDEAGMES) are disordered. Positions 252–269 (SDQSQVPSCSSSGSVPSD) are enriched in low complexity. A compositionally biased stretch (acidic residues) spans 270-279 (ESVDEAGMES).

It is found in the nucleus. Putative transcription factor. The sequence is that of Protein RKD2 (RKD2) from Arabidopsis thaliana (Mouse-ear cress).